Reading from the N-terminus, the 69-residue chain is MLKGILYIIGIYQRYLSPLKGPTCRFYPSCSRYAHESLTRYGLVKGLWLTTIRILKCHPFHPGGVDPVK.

This sequence belongs to the UPF0161 family.

The protein resides in the cell inner membrane. In terms of biological role, could be involved in insertion of integral membrane proteins into the membrane. The chain is Putative membrane protein insertion efficiency factor from Geobacter sulfurreducens (strain ATCC 51573 / DSM 12127 / PCA).